Here is a 778-residue protein sequence, read N- to C-terminus: Protein translocase subunit SecA 2 (778 aa).

Residues glutamine 94, 112–116 (GEGKT), and aspartate 501 contribute to the ATP site.

Belongs to the SecA family. Monomer and homodimer. Part of the essential Sec protein translocation apparatus which comprises SecA, SecYEG and auxiliary proteins SecDF. Other proteins may also be involved.

The protein resides in the cell membrane. It is found in the cytoplasm. The catalysed reaction is ATP + H2O + cellular proteinSide 1 = ADP + phosphate + cellular proteinSide 2.. Functionally, part of the Sec protein translocase complex. Interacts with the SecYEG preprotein conducting channel. Has a central role in coupling the hydrolysis of ATP to the transfer of proteins into and across the cell membrane, serving as an ATP-driven molecular motor driving the stepwise translocation of polypeptide chains across the membrane. In Mycobacterium leprae (strain TN), this protein is Protein translocase subunit SecA 2.